The sequence spans 74 residues: UPF0435 protein BcerKBAB4_0386 (74 aa).

Belongs to the UPF0435 family.

The protein is UPF0435 protein BcerKBAB4_0386 of Bacillus mycoides (strain KBAB4) (Bacillus weihenstephanensis).